A 285-amino-acid polypeptide reads, in one-letter code: N(G),N(G)-dimethylarginine dimethylaminohydrolase 1 (285 aa).

An N-acetylalanine modification is found at alanine 2. Position 30 (leucine 30) interacts with substrate. Phosphoserine is present on serine 33. Substrate is bound by residues aspartate 73, glutamate 78, aspartate 79, arginine 98, and arginine 145. The active-site Proton donor is histidine 173. The residue at position 222 (cysteine 222) is an S-nitrosocysteine. Position 268 (valine 268) interacts with substrate. S-nitrosocysteine is present on cysteine 274. The active-site Nucleophile is the cysteine 274. Cysteine 274 contacts Zn(2+).

The protein belongs to the DDAH family. As to quaternary structure, monomer. As to expression, detected in red blood cells (at protein level). Widely distributed, high amounts found in kidney, brain, aorta and pancreas.

It catalyses the reaction N(omega),N(omega)-dimethyl-L-arginine + H2O = dimethylamine + L-citrulline. The catalysed reaction is N(omega)-methyl-L-arginine + H2O = L-citrulline + methylamine. With respect to regulation, inhibited by zinc ions. In terms of biological role, hydrolyzes N(G),N(G)-dimethyl-L-arginine (ADMA) and N(G)-monomethyl-L-arginine (MMA) which act as inhibitors of NOS. Has therefore a role in the regulation of nitric oxide generation. In Rattus norvegicus (Rat), this protein is N(G),N(G)-dimethylarginine dimethylaminohydrolase 1 (Ddah1).